A 323-amino-acid chain; its full sequence is Leucine-rich repeat-containing protein 46 (323 aa).

4 LRR repeats span residues 49 to 70, 71 to 92, 93 to 114, and 115 to 135; these read DLET…ERLR, NIHS…ACIT, SLRF…LDLQ, and YLQF…DELP. The 43-residue stretch at 146-188 folds into the LRRCT domain; sequence NPCTNQDGYRKMVIGALPLLLDLDKQPILERWTSDEEDKSSDE. Residue threonine 178 is modified to Phosphothreonine. 3 positions are modified to phosphoserine: serine 179, serine 185, and serine 186. A coiled-coil region spans residues 203–228; the sequence is RGFFKDLEQELHQHQERRQQAALTEH. Positions 252-323 are disordered; that stretch reads DCSPAVTEEP…TKSTNKRGTK (72 aa). Residues 269–290 are compositionally biased toward polar residues; it reads ATSSTQMASSSKKQVPRNQKGS. Low complexity predominate over residues 297-310; the sequence is ALAATASKTSLAAA. Phosphoserine is present on serine 303.

The protein resides in the cell projection. Its subcellular location is the cilium. It is found in the flagellum. Its function is as follows. Required for normal spermatogenesis and male fertility. Plays an important role in sperm flagellum biogenesis. The polypeptide is Leucine-rich repeat-containing protein 46 (Lrrc46) (Rattus norvegicus (Rat)).